Consider the following 291-residue polypeptide: 4,5:9,10-diseco-3-hydroxy-5,9,17-trioxoandrosta-1(10),2-diene-4-oate hydrolase (291 aa).

Substrate is bound by residues 45–46, asparagine 54, asparagine 113, leucine 115, and arginine 192; that span reads GG. Histidine 269 functions as the Proton acceptor in the catalytic mechanism. Residue tryptophan 270 coordinates substrate.

It belongs to the AB hydrolase superfamily. HsaD family. As to quaternary structure, homodimer.

It catalyses the reaction (1E,2Z)-3-hydroxy-5,9,17-trioxo-4,5:9,10-disecoandrosta-1(10),2-dien-4-oate + H2O = 3-[(3aS,4S,7aS)-7a-methyl-1,5-dioxo-octahydro-1H-inden-4-yl]propanoate + (2Z,4Z)-2-hydroxyhexa-2,4-dienoate + H(+). The catalysed reaction is 2,6-dioxo-6-phenylhexa-3-enoate + H2O = 2-oxopent-4-enoate + benzoate + H(+). It functions in the pathway lipid metabolism; steroid biosynthesis. In terms of biological role, catalyzes the hydrolysis of a carbon-carbon bond in 4,5: 9,10-diseco-3-hydroxy-5,9,17-trioxoandrosta-1(10),2-diene-4-oate (4,9-DSHA) to yield 9,17-dioxo-1,2,3,4,10,19-hexanorandrostan-5-oate (DOHNAA) and 2-hydroxy-hexa-2,4-dienoate (HHD). Is also able to catalyze the hydrolysis of 2-hydroxy-6-oxo-6-phenylhexa-2,4-dienoic acid (HOPDA) and the synthetic analog 8-(2-chlorophenyl)-2-hydroxy-5-methyl-6-oxoocta-2,4-dienoic acid (HOPODA). This is 4,5:9,10-diseco-3-hydroxy-5,9,17-trioxoandrosta-1(10),2-diene-4-oate hydrolase (hsaD) from Mycobacterium tuberculosis (strain ATCC 25618 / H37Rv).